Consider the following 272-residue polypeptide: 1,4-dihydroxy-2-naphthoyl-CoA synthase (272 aa).

Substrate is bound by residues Arg-33, 72-76, Tyr-84, 116-120, Thr-142, Ser-148, Tyr-245, and Lys-260; these read SGGDQ and YAIGG. 141-143 contributes to the hydrogencarbonate binding site; it reads QTG. Residues 253–264 show a composition bias toward basic and acidic residues; it reads GRDAFKEKRDPD. The interval 253–272 is disordered; the sequence is GRDAFKEKRDPDFDQFPKFP.

The protein belongs to the enoyl-CoA hydratase/isomerase family. MenB subfamily. Hydrogencarbonate is required as a cofactor.

The enzyme catalyses 2-succinylbenzoyl-CoA + H(+) = 1,4-dihydroxy-2-naphthoyl-CoA + H2O. It functions in the pathway quinol/quinone metabolism; 1,4-dihydroxy-2-naphthoate biosynthesis; 1,4-dihydroxy-2-naphthoate from chorismate: step 6/7. Its pathway is quinol/quinone metabolism; menaquinone biosynthesis. Converts o-succinylbenzoyl-CoA (OSB-CoA) to 1,4-dihydroxy-2-naphthoyl-CoA (DHNA-CoA). The chain is 1,4-dihydroxy-2-naphthoyl-CoA synthase from Staphylococcus haemolyticus (strain JCSC1435).